The primary structure comprises 792 residues: 5-methyltetrahydropteroyltriglutamate--homocysteine methyltransferase (792 aa).

5-methyltetrahydropteroyltri-L-glutamate contacts are provided by residues R16–K19 and K112. L-homocysteine contacts are provided by residues I432–S434 and E485. Residues I432–S434 and E485 each bind L-methionine. 5-methyltetrahydropteroyltri-L-glutamate contacts are provided by residues R516–C517 and W562. Residue D600 coordinates L-homocysteine. Residue D600 participates in L-methionine binding. A 5-methyltetrahydropteroyltri-L-glutamate-binding site is contributed by E606. Residues H642, C644, and E666 each contribute to the Zn(2+) site. H695 functions as the Proton donor in the catalytic mechanism. C727 provides a ligand contact to Zn(2+).

This sequence belongs to the vitamin-B12 independent methionine synthase family. Requires Zn(2+) as cofactor.

It carries out the reaction 5-methyltetrahydropteroyltri-L-glutamate + L-homocysteine = tetrahydropteroyltri-L-glutamate + L-methionine. It participates in amino-acid biosynthesis; L-methionine biosynthesis via de novo pathway; L-methionine from L-homocysteine (MetE route): step 1/1. Its function is as follows. Catalyzes the transfer of a methyl group from 5-methyltetrahydrofolate to homocysteine resulting in methionine formation. The polypeptide is 5-methyltetrahydropteroyltriglutamate--homocysteine methyltransferase (Cupriavidus necator (Alcaligenes eutrophus)).